The primary structure comprises 488 residues: Glycogen synthase (488 aa).

K16 is a binding site for ADP-alpha-D-glucose.

This sequence belongs to the glycosyltransferase 1 family. Bacterial/plant glycogen synthase subfamily.

It carries out the reaction [(1-&gt;4)-alpha-D-glucosyl](n) + ADP-alpha-D-glucose = [(1-&gt;4)-alpha-D-glucosyl](n+1) + ADP + H(+). Its pathway is glycan biosynthesis; glycogen biosynthesis. In terms of biological role, synthesizes alpha-1,4-glucan chains using ADP-glucose. The sequence is that of Glycogen synthase from Marinobacter nauticus (strain ATCC 700491 / DSM 11845 / VT8) (Marinobacter aquaeolei).